Reading from the N-terminus, the 237-residue chain is Uridylate kinase (237 aa).

Position 9–12 (9–12 (KLSG)) interacts with ATP. Gly51 provides a ligand contact to UMP. 2 residues coordinate ATP: Gly52 and Arg56. UMP contacts are provided by residues Asp71 and 132-139 (CGNPFFTT). ATP contacts are provided by Thr159, Tyr165, and Asp168.

The protein belongs to the UMP kinase family. In terms of assembly, homohexamer.

Its subcellular location is the cytoplasm. The catalysed reaction is UMP + ATP = UDP + ADP. It functions in the pathway pyrimidine metabolism; CTP biosynthesis via de novo pathway; UDP from UMP (UMPK route): step 1/1. With respect to regulation, inhibited by UTP. Its function is as follows. Catalyzes the reversible phosphorylation of UMP to UDP. This chain is Uridylate kinase, found in Prochlorococcus marinus (strain NATL1A).